The following is a 644-amino-acid chain: Phosphatidylinositol polyphosphate 5-phosphatase type IV (644 aa).

The disordered stretch occupies residues 1 to 193 (MPSKAENLRP…RLPSLLPPRP (193 aa)). 8 consecutive repeat copies span residues 10-13 (PSEP), 15-18 (PQPP), 28-31 (PGAP), 39-42 (PPDA), 55-58 (PATP), 69-71 (PIA), 72-74 (PRP), and 75-78 (PARP). The tract at residues 10–242 (PSEPAPQPPE…SLGPGRPRSP (233 aa)) is 13 X 4 AA repeats of P-X-X-P. The span at 78-90 (PRLERALSLDDKG) shows a compositional bias: basic and acidic residues. S99 is modified (phosphoserine). The span at 107 to 118 (NGTSPSRGSVQS) shows a compositional bias: polar residues. Repeat unit 9 spans residues 121 to 124 (PGAP). A compositionally biased stretch (low complexity) spans 152 to 163 (GSPSSGGNPLSG). A run of 4 repeats spans residues 169–172 (PNLP), 183–185 (PRL), 190–193 (PPRP), and 236–239 (PGRP). Phosphoserine occurs at positions 241 and 256. C641 carries the post-translational modification Cysteine methyl ester. The S-farnesyl cysteine moiety is linked to residue C641. The propeptide at 642–644 (SVS) is removed in mature form.

This sequence belongs to the inositol 1,4,5-trisphosphate 5-phosphatase type IV family. In terms of assembly, interacts (when prenylated) with PDE6D; this is important for normal location in cilia. As to expression, detected in brain, heart, pancreas, testis and spleen.

Its subcellular location is the cytoplasm. The protein resides in the cytoskeleton. It is found in the cilium axoneme. It localises to the golgi apparatus. The protein localises to the golgi stack membrane. Its subcellular location is the cell membrane. The protein resides in the cell projection. It is found in the ruffle. It localises to the nucleus. The enzyme catalyses a 1,2-diacyl-sn-glycero-3-phospho-(1D-myo-inositol-4,5-bisphosphate) + H2O = a 1,2-diacyl-sn-glycero-3-phospho-(1D-myo-inositol 4-phosphate) + phosphate. It catalyses the reaction a 1,2-diacyl-sn-glycero-3-phospho-(1D-myo-inositol-3,4,5-trisphosphate) + H2O = a 1,2-diacyl-sn-glycero-3-phospho-(1D-myo-inositol-3,4-bisphosphate) + phosphate. It carries out the reaction a 1,2-diacyl-sn-glycero-3-phospho-(1D-myo-inositol-3,5-bisphosphate) + H2O = a 1,2-diacyl-sn-glycero-3-phospho-(1D-myo-inositol-3-phosphate) + phosphate. Active in the presence of octyl-glucoside or Triton X-100, but completely inhibited by CTAB. Functionally, phosphatidylinositol (PtdIns) phosphatase that specifically hydrolyzes the 5-phosphate of phosphatidylinositol-3,4,5-trisphosphate (PtdIns(3,4,5)P3), phosphatidylinositol 4,5-bisphosphate (PtdIns(4,5)P2) and phosphatidylinositol 3,5-bisphosphate (PtdIns(3,5)P2). Specific for lipid substrates, inactive towards water soluble inositol phosphates. Plays an essential role in the primary cilium by controlling ciliary growth and phosphoinositide 3-kinase (PI3K) signaling and stability. This Homo sapiens (Human) protein is Phosphatidylinositol polyphosphate 5-phosphatase type IV (INPP5E).